The chain runs to 163 residues: Ribonuclease H (163 aa).

One can recognise an RNase H type-1 domain in the interval 4–146; the sequence is SPKKVLIYTD…CDRLAVRASQ (143 aa). Residues Asp13, Glu51, Asp73, and Asp138 each contribute to the Mg(2+) site.

This sequence belongs to the RNase H family. In terms of assembly, monomer. The cofactor is Mg(2+).

The protein localises to the cytoplasm. The enzyme catalyses Endonucleolytic cleavage to 5'-phosphomonoester.. Its function is as follows. Endonuclease that specifically degrades the RNA of RNA-DNA hybrids. This is Ribonuclease H from Rippkaea orientalis (strain PCC 8801 / RF-1) (Cyanothece sp. (strain PCC 8801)).